Consider the following 241-residue polypeptide: 15,16-dihydrobiliverdin:ferredoxin oxidoreductase (241 aa).

A disordered region spans residues 16–35; it reads RGGQPAAVPEGLEHCHSSKS.

This sequence belongs to the HY2 family.

It catalyses the reaction 15,16-dihydrobiliverdin + oxidized 2[4Fe-4S]-[ferredoxin] = biliverdin IXalpha + reduced 2[4Fe-4S]-[ferredoxin] + 2 H(+). In terms of biological role, catalyzes the two-electron reduction of biliverdin IX-alpha at the C15 methine bridge. The polypeptide is 15,16-dihydrobiliverdin:ferredoxin oxidoreductase (Synechococcus sp. (strain WH7803)).